The primary structure comprises 367 residues: Dual-specificity RNA methyltransferase RlmN (367 aa).

Residue Glu91 is the Proton acceptor of the active site. In terms of domain architecture, Radical SAM core spans 102-337; the sequence is GKVRMTQCLS…AIIRKSKGQD (236 aa). The cysteines at positions 109 and 342 are disulfide-linked. [4Fe-4S] cluster-binding residues include Cys116, Cys120, and Cys123. Residues 169 to 170, Ser201, 223 to 225, and Asn299 each bind S-adenosyl-L-methionine; these read GE and SLH. Cys342 serves as the catalytic S-methylcysteine intermediate.

It belongs to the radical SAM superfamily. RlmN family. The cofactor is [4Fe-4S] cluster.

It is found in the cytoplasm. The catalysed reaction is adenosine(2503) in 23S rRNA + 2 reduced [2Fe-2S]-[ferredoxin] + 2 S-adenosyl-L-methionine = 2-methyladenosine(2503) in 23S rRNA + 5'-deoxyadenosine + L-methionine + 2 oxidized [2Fe-2S]-[ferredoxin] + S-adenosyl-L-homocysteine. The enzyme catalyses adenosine(37) in tRNA + 2 reduced [2Fe-2S]-[ferredoxin] + 2 S-adenosyl-L-methionine = 2-methyladenosine(37) in tRNA + 5'-deoxyadenosine + L-methionine + 2 oxidized [2Fe-2S]-[ferredoxin] + S-adenosyl-L-homocysteine. In terms of biological role, specifically methylates position 2 of adenine 2503 in 23S rRNA and position 2 of adenine 37 in tRNAs. m2A2503 modification seems to play a crucial role in the proofreading step occurring at the peptidyl transferase center and thus would serve to optimize ribosomal fidelity. The polypeptide is Dual-specificity RNA methyltransferase RlmN (Nitratidesulfovibrio vulgaris (strain DSM 19637 / Miyazaki F) (Desulfovibrio vulgaris)).